A 108-amino-acid chain; its full sequence is UPF0235 protein RPB_0109 (108 aa).

It belongs to the UPF0235 family.

The sequence is that of UPF0235 protein RPB_0109 from Rhodopseudomonas palustris (strain HaA2).